We begin with the raw amino-acid sequence, 338 residues long: Protein FosB (338 aa).

Disordered regions lie at residues 1-54 (MFQA…PGSF) and 80-179 (AQSQ…RREL). Over residues 13 to 31 (SRCSSSPSAESQYLSSVDS) the composition is skewed to polar residues. Ser-27 carries the phosphoserine modification. Residues 123–137 (PSTSTSTSGPVSARP) are compositionally biased toward low complexity. The bZIP domain occupies 155 to 218 (EEKRRVRRER…ERLEFVLVAH (64 aa)). Residues 157-182 (KRRVRRERNKLAAAKCRNRRRELTDR) form a basic motif region. The segment at 183 to 211 (LQAETDQLEEEKAELESEIAELQKEKERL) is leucine-zipper. Disordered regions lie at residues 222–276 (CKIP…PPNL) and 315–338 (AGSQRTSGSEQPSDPLNSPSLLAL). Positions 256 to 265 (LPPPPPPPLP) are enriched in pro residues. The segment covering 266–276 (FQSSRDAPPNL) has biased composition (polar residues).

The protein belongs to the bZIP family. Fos subfamily. Heterodimer; binds to DNA as heterodimer. Component of an AP-1 transcription factor complex; composed of FOS-JUN heterodimers. As part of the AP-1 transcription factor complex, forms heterodimers with JUN, JUNB or JUND, thereby binding to the AP-1 consensus sequence and stimulating transcription. Post-translationally, phosphorylated; phosphorylation is induced by chronic electroconvulsive seizure (ECS) treatment. In terms of tissue distribution, expressed in brain. Expressed in pyramidal cells in CA1 and CA3, in the dentate gyrus and the nucleus accumbens (at protein level).

It is found in the nucleus. Its function is as follows. Heterodimerizes with proteins of the JUN family to form an AP-1 transcription factor complex, thereby enhancing their DNA binding activity to an AP-1 consensus sequence 5'-TGA[GC]TCA-3' and enhancing their transcriptional activity. Exhibits transactivation activity in vitro. As part of the AP-1 complex, facilitates enhancer selection together with cell-type-specific transcription factors by collaboratively binding to nucleosomal enhancers and recruiting the SWI/SNF (BAF) chromatin remodeling complex to establish accessible chromatin. Together with JUN, plays a role in activation-induced cell death of T cells by binding to the AP-1 promoter site of FASLG/CD95L, and inducing its transcription in response to activation of the TCR/CD3 signaling pathway. Involved in the display of nurturing behavior towards newborns. May play a role in neurogenesis in the hippocampus and in learning and memory-related tasks by regulating the expression of various genes involved in neurogenesis, depression and epilepsy. Implicated in behavioral responses related to morphine reward and spatial memory. This is Protein FosB from Rattus norvegicus (Rat).